We begin with the raw amino-acid sequence, 102 residues long: NADH-quinone oxidoreductase subunit K (102 aa).

3 consecutive transmembrane segments (helical) span residues 5-25, 31-51, and 66-86; these read IAHY…GIFL, IIIL…FVAF, and FILT…VVFF.

Belongs to the complex I subunit 4L family. NDH-1 is composed of 14 different subunits. Subunits NuoA, H, J, K, L, M, N constitute the membrane sector of the complex.

The protein localises to the cell inner membrane. It catalyses the reaction a quinone + NADH + 5 H(+)(in) = a quinol + NAD(+) + 4 H(+)(out). NDH-1 shuttles electrons from NADH, via FMN and iron-sulfur (Fe-S) centers, to quinones in the respiratory chain. The immediate electron acceptor for the enzyme in this species is believed to be ubiquinone. Couples the redox reaction to proton translocation (for every two electrons transferred, four hydrogen ions are translocated across the cytoplasmic membrane), and thus conserves the redox energy in a proton gradient. In Bartonella bacilliformis (strain ATCC 35685 / KC583 / Herrer 020/F12,63), this protein is NADH-quinone oxidoreductase subunit K.